We begin with the raw amino-acid sequence, 264 residues long: Small ribosomal subunit protein eS1 (264 aa).

This sequence belongs to the eukaryotic ribosomal protein eS1 family. In terms of assembly, component of the small ribosomal subunit. Mature ribosomes consist of a small (40S) and a large (60S) subunit. The 40S subunit contains about 33 different proteins and 1 molecule of RNA (18S). The 60S subunit contains about 49 different proteins and 3 molecules of RNA (25S, 5.8S and 5S).

It is found in the cytoplasm. The chain is Small ribosomal subunit protein eS1 from Babesia bovis.